The sequence spans 32 residues: Cyclotide glopa A (32 aa).

The cyclopeptide (Gly-Asn) cross-link spans 1-32; that stretch reads GGSIPCIETCVWTGCFLVPGCSCKSDKKCYLN. 3 disulfides stabilise this stretch: Cys-6–Cys-21, Cys-10–Cys-23, and Cys-15–Cys-29.

This is a cyclic peptide.

Functionally, probably participates in a plant defense mechanism. In Gloeospermum pauciflorum, this protein is Cyclotide glopa A.